Consider the following 289-residue polypeptide: ATP synthase gamma chain (289 aa).

It belongs to the ATPase gamma chain family. F-type ATPases have 2 components, CF(1) - the catalytic core - and CF(0) - the membrane proton channel. CF(1) has five subunits: alpha(3), beta(3), gamma(1), delta(1), epsilon(1). CF(0) has three main subunits: a, b and c.

Its subcellular location is the cell inner membrane. In terms of biological role, produces ATP from ADP in the presence of a proton gradient across the membrane. The gamma chain is believed to be important in regulating ATPase activity and the flow of protons through the CF(0) complex. This Cereibacter sphaeroides (strain ATCC 17025 / ATH 2.4.3) (Rhodobacter sphaeroides) protein is ATP synthase gamma chain.